Consider the following 603-residue polypeptide: F-box only protein 46 (603 aa).

Residues 20–63 (YSQNQPRPPSAALKPSACPEPGGGAEPDHGPAHSENTPPALATE) form a disordered region. Phosphoserine; by ATM occurs at positions 21 and 67. Disordered regions lie at residues 111–163 (GGSR…PASA), 235–301 (EAQR…ARAK), 326–360 (LLAR…RDCG), and 396–440 (TVSP…AEGT). Low complexity predominate over residues 152 to 163 (GPPAAEEGPASA). Residue S338 is modified to Phosphoserine. At T347 the chain carries Phosphothreonine. 2 stretches are compositionally biased toward pro residues: residues 347–356 (TPPAPPPPPA) and 417–426 (DGPPEPPPAD). Residues 470–522 (RQYMLLLPEHVLVKIFSFLPTRALAALKCTCHHFKGIIEAFGVRATDSRWSRD) form the F-box domain.

In terms of assembly, part of a SCF (SKP1-cullin-F-box) protein ligase complex SCF(FBXO46) composed of CUL1, SKP1, RBX1 and FBXO46. Post-translationally, phosphorylated by ATM in response to DNA damage, promoting ubiquitination and degradation by the SCF(FBXO31) complex. ATM-phosphorylated FBXO46 is ubiquitinated and degradaded by the SCF(FBXO31) complex in response to DNA damage.

It functions in the pathway protein modification; protein ubiquitination. Substrate-recognition component of the SCF(FBXO46) protein ligase complex, which mediates the ubiquitination and degradation of target proteins. In absence of stress, the SCF(FBXO46) complex catalyzes ubiquitination and degradation of MTOR-phosphorylated FBXO31. The protein is F-box only protein 46 of Homo sapiens (Human).